The sequence spans 201 residues: Histidinol dehydrogenase (201 aa).

The protein belongs to the histidinol dehydrogenase family. In terms of assembly, homodimer. Requires Zn(2+) as cofactor.

The enzyme catalyses L-histidinol + 2 NAD(+) + H2O = L-histidine + 2 NADH + 3 H(+). Its pathway is amino-acid biosynthesis; L-histidine biosynthesis; L-histidine from 5-phospho-alpha-D-ribose 1-diphosphate: step 9/9. Functionally, catalyzes the sequential NAD-dependent oxidations of L-histidinol to L-histidinaldehyde and then to L-histidine. The sequence is that of Histidinol dehydrogenase (hisD) from Buchnera aphidicola subsp. Schlechtendalia chinensis.